A 239-amino-acid chain; its full sequence is Ribosomal RNA small subunit methyltransferase G (239 aa).

S-adenosyl-L-methionine-binding positions include G78, F83, 129–130, and R148; that span reads AE.

The protein belongs to the methyltransferase superfamily. RNA methyltransferase RsmG family.

The protein localises to the cytoplasm. Specifically methylates the N7 position of a guanine in 16S rRNA. This chain is Ribosomal RNA small subunit methyltransferase G, found in Clostridium botulinum (strain Eklund 17B / Type B).